We begin with the raw amino-acid sequence, 107 residues long: MEDPRCAPLLLLLLLPLLLTPPAGDAAVITGACDKDSQCGGGMCCAVSIWVKSIRICTPMGQVGDSCHPLTRKVPFWGRRMHHTCPCLPGLACLRTSFNRFICLARK.

The first 26 residues, 1 to 26, serve as a signal peptide directing secretion; that stretch reads MEDPRCAPLLLLLLLPLLLTPPAGDA. Disulfide bonds link Cys-33/Cys-45, Cys-39/Cys-57, Cys-44/Cys-85, Cys-67/Cys-93, and Cys-87/Cys-103.

This sequence belongs to the AVIT (prokineticin) family. As to expression, expressed at high levels in testis and at lower levels in brain, lung, ovary, spleen, thymus and uterus.

It is found in the secreted. Its function is as follows. May function as an output molecule from the suprachiasmatic nucleus (SCN) that transmits behavioral circadian rhythm. May also function locally within the SCN to synchronize output. Potently contracts gastrointestinal (GI) smooth muscle. This chain is Prokineticin-2 (Prok2), found in Rattus norvegicus (Rat).